We begin with the raw amino-acid sequence, 651 residues long: MPKIHQLSATLSNQIAAGEVIERPASVVKELVENSIDAQATQIDVLISAAGLQEIRVSDNGIGIAPDDVATAFLRHATSKILTTRDLFNVHSLGFRGEALASIAAVADVKLTTATDSGIGTQIHVKGGEVEAQSTAAHRRGTDVEVNDLFFNTPARLKYMKSQQTELGKIVDIVSRLAMANPDIAFTVSHDGNMVVRTAGQGDLRQTLAGIYGLSVARSMVDFKAQDLDFRVSGLTSLPETTRASRNYLSLVVNGRYIKNFQLTKAVIAGYGSKLMVGRYPMGVINIEMDAALVDVNVHPTKAEVRLSKEDQLSHLLSEAIRTRLAKENLIPDALDNLPKRERYDLDQLELTLNKISPKTMPSVQPQQGQQLRENTTTNLADTAAEEPTPAPTSPDLEIGDLDDQPIFNEPQRLAAWDQRYQRLASNVVPTLVADEPEPDISHVESAERFPNLTYLAQVHGTYLLAESGDGLYILDQHAAQERVNYEYYRQAIGEVSNDQQHLLVPIVLDYSAADAISIRDHRDVLESVGLYLEDFGQNSFVVEHHPTWFKAGQEEDTIKEMVDWVLRDGRMTVAAFREKTAIMMSCKRAIKANHHLDDRQARALLQKLPECENPFNCPHGRPVLVHFSNTDLEKMFKRIQDSHESGEMQA.

The disordered stretch occupies residues 383-405; the sequence is TAAEEPTPAPTSPDLEIGDLDDQ.

This sequence belongs to the DNA mismatch repair MutL/HexB family.

Functionally, this protein is involved in the repair of mismatches in DNA. It is required for dam-dependent methyl-directed DNA mismatch repair. May act as a 'molecular matchmaker', a protein that promotes the formation of a stable complex between two or more DNA-binding proteins in an ATP-dependent manner without itself being part of a final effector complex. This chain is DNA mismatch repair protein MutL, found in Lacticaseibacillus paracasei (strain ATCC 334 / BCRC 17002 / CCUG 31169 / CIP 107868 / KCTC 3260 / NRRL B-441) (Lactobacillus paracasei).